The chain runs to 494 residues: Catalase A (494 aa).

Positions 1–23 (MTDRPTITTTAGAPVPDNQNSLT) are enriched in polar residues. The interval 1 to 25 (MTDRPTITTTAGAPVPDNQNSLTAG) is disordered. Catalysis depends on residues His-55 and Asn-127. Tyr-337 lines the heme pocket.

It belongs to the catalase family. Requires heme as cofactor.

The protein localises to the periplasm. It carries out the reaction 2 H2O2 = O2 + 2 H2O. Functionally, decomposes hydrogen peroxide into water and oxygen; serves to protect cells from the toxic effects of hydrogen peroxide. The polypeptide is Catalase A (katA) (Rhizobium meliloti (strain 1021) (Ensifer meliloti)).